The primary structure comprises 367 residues: D-alanine--D-alanine ligase (367 aa).

Positions 148–357 constitute an ATP-grasp domain; sequence KMAFEQAGLP…FPELVDKLVQ (210 aa). 184–239 provides a ligand contact to ATP; sequence EASLGYPCFVKPANLGSSVGISKVRSRQELEDALDNAANYDRRIIVEAGVVAREVE. Mg(2+) contacts are provided by D310, E324, and N326.

It belongs to the D-alanine--D-alanine ligase family. Requires Mg(2+) as cofactor. The cofactor is Mn(2+).

The protein localises to the cytoplasm. It carries out the reaction 2 D-alanine + ATP = D-alanyl-D-alanine + ADP + phosphate + H(+). Its pathway is cell wall biogenesis; peptidoglycan biosynthesis. Functionally, cell wall formation. This Trichormus variabilis (strain ATCC 29413 / PCC 7937) (Anabaena variabilis) protein is D-alanine--D-alanine ligase.